We begin with the raw amino-acid sequence, 256 residues long: Fumarate reductase cytochrome b subunit (256 aa).

At 1–30 (MTNESILESYSGVTPERKKSRMPAKLDWWQ) the chain is on the cytoplasmic side. A helical membrane pass occupies residues 31–52 (SATGLFLGLFMIGHMFFVSTIL). His44 contacts heme b. Residues 53–76 (LGDNVMLWVTKKFELDFIFEGGKP) lie on the Periplasmic side of the membrane. The helical transmembrane segment at 77-98 (IVVSFLAAFVFAVFIAHAFLAM) threads the bilayer. Residue His93 coordinates heme b. Residues 99–124 (RKFPINYRQYLTFKTHKDLMRHGDTT) lie on the Cytoplasmic side of the membrane. The helical transmembrane segment at 125 to 149 (LWWIQAMTGFAMFFLGSVHLYIMMT) threads the bilayer. His143 provides a ligand contact to heme b. Topologically, residues 150-165 (QPQTIGPVSSSFRMVS) are periplasmic. Residues 166 to 188 (EWMWPLYLVLLFAVELHGSVGLY) traverse the membrane as a helical segment. His182 is a binding site for heme b. The Cytoplasmic segment spans residues 189-206 (RLAVKWGWFDGETPDKTR). A helical membrane pass occupies residues 207 to 230 (ANLKKLKTLMSAFLIVLGLLTFGA). At 231 to 256 (YVKKGLEQTDPNIDYKYFDYKRTHHR) the chain is on the periplasmic side.

It belongs to the diheme cytochrome b FrdC family. As to quaternary structure, part of an enzyme complex containing three subunits: a flavoprotein (frdA), an iron-sulfur protein (frdB), and diheme cytochrome b (frdC). Heme b is required as a cofactor.

The protein localises to the cell inner membrane. The fumarate reductase enzyme complex is required for fumarate respiration using formate or sulfide as electron donor. This subunit anchors the complex in the membrane and binds a diheme cytochrome b. The protein is Fumarate reductase cytochrome b subunit (frdC) of Wolinella succinogenes (strain ATCC 29543 / DSM 1740 / CCUG 13145 / JCM 31913 / LMG 7466 / NCTC 11488 / FDC 602W) (Vibrio succinogenes).